A 496-amino-acid polypeptide reads, in one-letter code: L-arabinose isomerase (496 aa).

Residues glutamate 302, glutamate 329, histidine 346, and histidine 445 each contribute to the Mn(2+) site.

This sequence belongs to the arabinose isomerase family. Mn(2+) is required as a cofactor.

It catalyses the reaction beta-L-arabinopyranose = L-ribulose. It participates in carbohydrate degradation; L-arabinose degradation via L-ribulose; D-xylulose 5-phosphate from L-arabinose (bacterial route): step 1/3. Catalyzes the conversion of L-arabinose to L-ribulose. The protein is L-arabinose isomerase of Thermotoga sp. (strain RQ2).